The following is a 535-amino-acid chain: Expansin-like protein 9 (535 aa).

Positions 1 to 25 are cleaved as a signal peptide; sequence MKINKNNYFKIIIFIIYVIINLINA. A glycan (N-linked (GlcNAc...) asparagine) is linked at asparagine 24. Residues 26–514 are Extracellular-facing; that stretch reads SDNVKLSNCG…DNSSNILLFS (489 aa). One can recognise an Expansin-like EG45 domain in the interval 31–144; that stretch reads LSNCGQARAE…QEVSCGFLGN (114 aa). Intrachain disulfides connect cysteine 34-cysteine 75 and cysteine 78-cysteine 139. Asparagine 122, asparagine 257, and asparagine 292 each carry an N-linked (GlcNAc...) asparagine glycan. Residues 459 to 487 are disordered; sequence VDGSSNDDDGTGGTGGGASNKVGKRVDGE. Asparagine 506 carries an N-linked (GlcNAc...) asparagine glycan. Residues 515–535 form a helical membrane-spanning segment; it reads FNITLTFLLLSLIINILLLLF.

This sequence belongs to the expansin family. Expansin A subfamily.

Its subcellular location is the membrane. Its function is as follows. May serve to lubricate the movement of the cellulose microfibrils during cell growth and wall extension and/or may serve to maintain the fluid state of the slug cell wall. The sequence is that of Expansin-like protein 9 (expl9) from Dictyostelium discoideum (Social amoeba).